The following is a 529-amino-acid chain: Peptide chain release factor 3 (529 aa).

One can recognise a tr-type G domain in the interval Ala-11–Met-280. Residues Ser-20–Thr-27, Asp-88–His-92, and Asn-142–Asp-145 contribute to the GTP site.

The protein belongs to the TRAFAC class translation factor GTPase superfamily. Classic translation factor GTPase family. PrfC subfamily.

It is found in the cytoplasm. Increases the formation of ribosomal termination complexes and stimulates activities of RF-1 and RF-2. It binds guanine nucleotides and has strong preference for UGA stop codons. It may interact directly with the ribosome. The stimulation of RF-1 and RF-2 is significantly reduced by GTP and GDP, but not by GMP. In Yersinia enterocolitica serotype O:8 / biotype 1B (strain NCTC 13174 / 8081), this protein is Peptide chain release factor 3.